The chain runs to 246 residues: UDP-N-acetyl-D-mannosaminuronic acid transferase (246 aa).

It belongs to the glycosyltransferase 26 family.

It catalyses the reaction UDP-N-acetyl-alpha-D-mannosaminouronate + N-acetyl-alpha-D-glucosaminyl-di-trans,octa-cis-undecaprenyl diphosphate = beta-D-ManNAcA-(1-&gt;4)-alpha-D-GlcNAc-di-trans,octa-cis-undecaprenyl diphosphate + UDP + H(+). Its pathway is bacterial outer membrane biogenesis; enterobacterial common antigen biosynthesis. Catalyzes the synthesis of Und-PP-GlcNAc-ManNAcA (Lipid II), the second lipid-linked intermediate involved in enterobacterial common antigen (ECA) synthesis. The protein is UDP-N-acetyl-D-mannosaminuronic acid transferase of Serratia proteamaculans (strain 568).